The primary structure comprises 369 residues: Aminomethyltransferase (369 aa).

The protein belongs to the GcvT family. The glycine cleavage system is composed of four proteins: P, T, L and H.

It catalyses the reaction N(6)-[(R)-S(8)-aminomethyldihydrolipoyl]-L-lysyl-[protein] + (6S)-5,6,7,8-tetrahydrofolate = N(6)-[(R)-dihydrolipoyl]-L-lysyl-[protein] + (6R)-5,10-methylene-5,6,7,8-tetrahydrofolate + NH4(+). Functionally, the glycine cleavage system catalyzes the degradation of glycine. This is Aminomethyltransferase from Synechococcus sp. (strain WH7803).